Reading from the N-terminus, the 239-residue chain is Phosducin-like protein 3 (239 aa).

N-acetylmethionine is present on methionine 1. One can recognise a Phosducin domain in the interval 32–180 (EAEEEQRILQ…EGDIKAQFIG (149 aa)). Residues serine 43, serine 234, and serine 236 each carry the phosphoserine modification. Residues 91–239 (FGEVLEISGK…MKRDSDSEGD (149 aa)) form a thioredoxin fold region.

This sequence belongs to the phosducin family. In terms of assembly, interacts (via thioredoxin fold region) with KDR/VEGFR2 (via juxtamembrane domain). Forms ternary complexes with the chaperonin CCT complex and actin substrate, leading to inhibition of actin folding. Interacts with XIAP (via BIR 3 and RING domain). Interacts with HSP90AA1 and HSP90AB1. In terms of processing, N-terminal methionine acetylation destabilizes the protein.

The protein localises to the cytoplasm. It is found in the perinuclear region. The protein resides in the endoplasmic reticulum. Acts as a chaperone for the angiogenic VEGF receptor KDR/VEGFR2, increasing its abundance by inhibiting its ubiquitination and degradation. Inhibits the folding activity of the chaperonin-containing T-complex (CCT) which leads to inhibition of cytoskeletal actin folding. Acts as a chaperone during heat shock alongside HSP90 and HSP40/70 chaperone complexes. Modulates the activation of caspases during apoptosis. This is Phosducin-like protein 3 (PDCL3) from Pongo abelii (Sumatran orangutan).